Here is a 596-residue protein sequence, read N- to C-terminus: Structural protein precursor VP8 (596 aa).

It is found in the virion. Functionally, 120 subunits of the putative clamp protein VP8b appear to stabilize the capsid shell. This chain is Structural protein precursor VP8, found in Oryza latifolia (Indian wild rice).